A 636-amino-acid polypeptide reads, in one-letter code: 1-deoxy-D-xylulose-5-phosphate synthase (636 aa).

Thiamine diphosphate is bound by residues H72 and 113–115 (GHA). D144 provides a ligand contact to Mg(2+). Thiamine diphosphate-binding positions include 145–146 (GS), N174, Y287, and E370. N174 contributes to the Mg(2+) binding site.

It belongs to the transketolase family. DXPS subfamily. As to quaternary structure, homodimer. Requires Mg(2+) as cofactor. Thiamine diphosphate is required as a cofactor.

It catalyses the reaction D-glyceraldehyde 3-phosphate + pyruvate + H(+) = 1-deoxy-D-xylulose 5-phosphate + CO2. Its pathway is metabolic intermediate biosynthesis; 1-deoxy-D-xylulose 5-phosphate biosynthesis; 1-deoxy-D-xylulose 5-phosphate from D-glyceraldehyde 3-phosphate and pyruvate: step 1/1. Catalyzes the acyloin condensation reaction between C atoms 2 and 3 of pyruvate and glyceraldehyde 3-phosphate to yield 1-deoxy-D-xylulose-5-phosphate (DXP). The protein is 1-deoxy-D-xylulose-5-phosphate synthase of Synechococcus sp. (strain ATCC 27144 / PCC 6301 / SAUG 1402/1) (Anacystis nidulans).